We begin with the raw amino-acid sequence, 454 residues long: MLNIMEVHETNQMIEQEKLDVRTITMGISLLDCASDDVDKTCDNIYRKITTYAKDLVSTGKAIERDYGIPIVNKRITVTPISLVGASSCKTSEDFVKIAHALDKAAKEVGVDLIGGYSALVSKSMTPAEELLIRSLPQALSETDIVCSSVNVGSTKTGIDMNAVELLGHIIKDVAERTADNDSYGCVKFVAFCNVPDDNPFMAGGFHGVTEGDAVINVGVSGPGVVSRALDAAKGKDFEFLCETIKRTAFKITRVGQLVAQEASRRLGIPFGIIDLSLAPTPAVGDSVGEVLEKIGLEQVGAPGTTAALAMLNDQVKKGGIMASSYVGGLSGAFIPVSEDKNMIDAASSGCLTLEKLEAMTCVCSVGLDMIAIPGDTSASTISGLIADEAAIGMVNQKTTAVRVIPVEGKGVGEMANFGGLMGYAPIIPVNQTSCEAFVTRGGRIPAPIHSFKN.

This sequence belongs to the UPF0210 family. Homodimer.

The sequence is that of UPF0210 protein Blon_2054/BLIJ_2131 from Bifidobacterium longum subsp. infantis (strain ATCC 15697 / DSM 20088 / JCM 1222 / NCTC 11817 / S12).